Reading from the N-terminus, the 306-residue chain is Ribose-5-phosphate isomerase (306 aa).

Residues 45-68 form a disordered region; the sequence is GRAQFGVGSTSTSSGDANSVCPAP. Residues 51–61 are compositionally biased toward polar residues; it reads VGSTSTSSGDA. Ser102 bears the Phosphoserine mark.

This sequence belongs to the ribose 5-phosphate isomerase family.

The enzyme catalyses aldehydo-D-ribose 5-phosphate = D-ribulose 5-phosphate. The protein operates within carbohydrate degradation; pentose phosphate pathway; D-ribose 5-phosphate from D-ribulose 5-phosphate (non-oxidative stage): step 1/1. The chain is Ribose-5-phosphate isomerase from Sus scrofa (Pig).